Here is a 439-residue protein sequence, read N- to C-terminus: Ectonucleotide pyrophosphatase/phosphodiesterase family member 7 (439 aa).

An N-terminal signal peptide occupies residues 1-21; it reads MGHSAVLLSVALVILPACVTG. Topologically, residues 22–422 are extracellular; the sequence is GPVQRQQQHK…RSGSPLSRQH (401 aa). Residues D38 and T74 each coordinate Zn(2+). The tract at residues 71–77 is required for enzyme activity; it reads VTMTSPC. The Nucleophile role is filled by T74. Substrate is bound at residue N95. N-linked (GlcNAc...) asparagine glycans are attached at residues N99, N120, N145, and N167. Zn(2+)-binding residues include D198, H202, D245, and H246. An N-linked (GlcNAc...) asparagine glycan is attached at N266. Residue H352 participates in Zn(2+) binding. Residues 423 to 439 form a helical membrane-spanning segment; that stretch reads HLVVVLMGILTGLAKVV.

This sequence belongs to the nucleotide pyrophosphatase/phosphodiesterase family. The cofactor is Zn(2+). N-glycosylated; required for activity and transport to the plasma membrane. As to expression, detected in small intestine (at protein level). Highly expressed in the jejunum.

Its subcellular location is the cell membrane. It carries out the reaction a sphingomyelin + H2O = phosphocholine + an N-acylsphing-4-enine + H(+). The enzyme catalyses a 1-O-alkyl-2-acetyl-sn-glycero-3-phosphocholine + H2O = a 1-O-alkyl-2-acetyl-sn-glycerol + phosphocholine + H(+). It catalyses the reaction 1-O-octadecyl-2-acetyl-sn-glycero-3-phosphocholine + H2O = 1-O-octadecyl-2-acetyl-sn-glycerol + phosphocholine + H(+). The catalysed reaction is 1-hexadecanoyl-sn-glycero-3-phosphocholine + H2O = 1-hexadecanoyl-sn-glycerol + phosphocholine + H(+). Platelet-activating factor hydrolysis is inhibited by higher amount of sphingomyelin. The hydrolysis of platelet-activating factor and sphingomyelin can be inhibited by the presence of sphingomyelin and platelet-activating factor respectively, the inhibition of platelet-activating factor hydrolysis by sphingomyelin being stronger. PAF hydrolysis is dose-dependently increased by both taurocholate (TC) and taurodeoxycholate (TDC). Hydrolase activity against PAF is inhibited by EDTA and stimulated by 0.1-0.25 mM Zn2+. Its function is as follows. Choline-specific phosphodiesterase that hydrolyzes sphingomyelin (SM) releasing the ceramide and phosphocholine and therefore is involved in sphingomyelin digestion, ceramide formation, and fatty acid (FA) absorption in the gastrointestinal tract. Also has phospholipase C activity and can also cleave phosphocholine from palmitoyl lyso-phosphatidylcholine and platelet-activating factor (PAF) leading to its inactivation. Does not have nucleotide pyrophosphatase activity. May promote cholesterol absorption by affecting the levels of sphingomyelin derived from either diet or endogenous sources, in the intestinal lumen. This is Ectonucleotide pyrophosphatase/phosphodiesterase family member 7 from Rattus norvegicus (Rat).